The primary structure comprises 315 residues: Ornithine carbamoyltransferase (315 aa).

Carbamoyl phosphate is bound by residues 53 to 56 (STRT), glutamine 80, arginine 104, and 131 to 134 (HPCQ). L-ornithine-binding positions include asparagine 163, aspartate 227, and 231 to 232 (SM). Residues 267 to 268 (CL) and arginine 295 each bind carbamoyl phosphate.

This sequence belongs to the aspartate/ornithine carbamoyltransferase superfamily. OTCase family.

The protein localises to the cytoplasm. It carries out the reaction carbamoyl phosphate + L-ornithine = L-citrulline + phosphate + H(+). It functions in the pathway amino-acid degradation; L-arginine degradation via ADI pathway; carbamoyl phosphate from L-arginine: step 2/2. Functionally, reversibly catalyzes the transfer of the carbamoyl group from carbamoyl phosphate (CP) to the N(epsilon) atom of ornithine (ORN) to produce L-citrulline. This is Ornithine carbamoyltransferase from Rhodococcus opacus (strain B4).